Reading from the N-terminus, the 361-residue chain is Mitogen-activated protein kinase 14B (361 aa).

One can recognise a Protein kinase domain in the interval 25-309; sequence YQNLSPVGSG…ASQALAHPYF (285 aa). Residues 31-39 and Lys-54 contribute to the ATP site; that span reads VGSGAYGSV. The active-site Proton acceptor is Asp-151. A Phosphothreonine; by MAP2K6 modification is found at Thr-181. A TXY motif is present at residues 181–183; sequence TGY. Phosphotyrosine; by MAP2K6 is present on Tyr-183.

The protein belongs to the protein kinase superfamily. CMGC Ser/Thr protein kinase family. MAP kinase subfamily. Mg(2+) serves as cofactor. In terms of processing, dually phosphorylated on Thr-181 and Tyr-183, which activates the enzyme. In terms of tissue distribution, predominantly expressed in the ovary. Lower levels present in brain, gill, heart, spleen, kidney, muscle and gut.

The protein localises to the cytoplasm. It is found in the nucleus. The catalysed reaction is L-seryl-[protein] + ATP = O-phospho-L-seryl-[protein] + ADP + H(+). It carries out the reaction L-threonyl-[protein] + ATP = O-phospho-L-threonyl-[protein] + ADP + H(+). With respect to regulation, activated by threonine and tyrosine phosphorylation by the dual specificity kinase, MKK6. Its function is as follows. Serine/threonine kinase which acts as an essential component of the MAP kinase signal transduction pathway. Mapk14b is one of the four p38 MAPKs which play an important role in the cascades of cellular responses evoked by extracellular stimuli such as pro-inflammatory cytokines or physical stress leading to direct activation of transcription factors. Accordingly, p38 MAPKs phosphorylate a broad range of proteins and it has been estimated that they may have approximately 200 to 300 substrates each. Some of the targets are downstream kinases which are activated through phosphorylation and further phosphorylate additional targets. The polypeptide is Mitogen-activated protein kinase 14B (mapk14b) (Cyprinus carpio (Common carp)).